A 420-amino-acid polypeptide reads, in one-letter code: Ketoreductase sphF (420 aa).

The tract at residues 1 to 21 is disordered; it reads MLERPSFPRLGAGTRHHRPLG. The helical transmembrane segment at 29–49 threads the bilayer; the sequence is WLLAFTGISGIAGMMIPYVPW. The tract at residues 275-298 is disordered; it reads RQKRSPSPGRHPALGSPPAQLRQD.

It is found in the membrane. It carries out the reaction 3-oxopresphingofungin + NADPH + 2 H(+) = presphingofungin + NADP(+). Its pathway is secondary metabolite biosynthesis. Functionally, ketoreductase; part of the gene cluster that mediates the biosynthesis of sphingofungins, bioactive molecules acting as sphingolipid inhibitors via inhibiting serine palmitoyl transferase (SPT). Within the pathway, sphF catalyzes the reduction of the C-3 ketone of 3-keto-presphingofungin to produce presphingofungin. Sphingofungin biosynthesis starts with the PKS sphB that produces an C18 polyketide precursor 3-hydroxyoctadeca-4,10-dienoyl-ACP containing one delta-6 desaturation and one delta-12 desaturation. The aminoacyl transferase sphA uses the sphB product to produce 3-keto-presphingofungin by adding an aminomalonate molecule. SphF then reduces the C-3 ketone of 3-keto-presphingofungin which leads to presphingofungin. The cytochrome P450 monooxygenase sphH converts presphingofungin into sphingofungin B1 which is further converted to sphingofungin B by the dioxygenase sphC. SphC is also able to convert presphingofungin into sphingofungin B2. The acetyltransferase sphE acetylates sphingofungin B to produce sphingofungin C, but can also convert sphingofungin B1 into sphingofungin C1 and sphingofungin B2 into sphingofungin C2. Finally, sphingofungin C can be spontaneously converted into sphingofungin D. The polypeptide is Ketoreductase sphF (Aspergillus fumigatus (strain CBS 144.89 / FGSC A1163 / CEA10) (Neosartorya fumigata)).